Reading from the N-terminus, the 643-residue chain is Threonine--tRNA ligase (643 aa).

Residues 1 to 61 enclose the TGS domain; it reads MIEIFIEDLN…NQSGNLKFLK (61 aa). The interval 246–539 is catalytic; sequence DHRKIGKDLE…LLEHYAGFLP (294 aa). Zn(2+) contacts are provided by cysteine 339, histidine 390, and histidine 516.

This sequence belongs to the class-II aminoacyl-tRNA synthetase family. As to quaternary structure, homodimer. It depends on Zn(2+) as a cofactor.

Its subcellular location is the cytoplasm. The enzyme catalyses tRNA(Thr) + L-threonine + ATP = L-threonyl-tRNA(Thr) + AMP + diphosphate + H(+). Catalyzes the attachment of threonine to tRNA(Thr) in a two-step reaction: L-threonine is first activated by ATP to form Thr-AMP and then transferred to the acceptor end of tRNA(Thr). Also edits incorrectly charged L-seryl-tRNA(Thr). The chain is Threonine--tRNA ligase from Sulfurihydrogenibium sp. (strain YO3AOP1).